Here is a 659-residue protein sequence, read N- to C-terminus: Ion-translocating oxidoreductase complex subunit C (659 aa).

4Fe-4S ferredoxin-type domains follow at residues 366–397 (TEMG…QQLY) and 407–436 (KARN…VQYY). 8 residues coordinate [4Fe-4S] cluster: Cys377, Cys380, Cys383, Cys387, Cys416, Cys419, Cys422, and Cys426.

The protein belongs to the 4Fe4S bacterial-type ferredoxin family. RnfC subfamily. In terms of assembly, the complex is composed of six subunits: RnfA, RnfB, RnfC, RnfD, RnfE and RnfG. Requires [4Fe-4S] cluster as cofactor.

The protein localises to the cell inner membrane. Part of a membrane-bound complex that couples electron transfer with translocation of ions across the membrane. This chain is Ion-translocating oxidoreductase complex subunit C, found in Yersinia pseudotuberculosis serotype IB (strain PB1/+).